The chain runs to 438 residues: Transposon Ty2-GR1 Gag polyprotein (438 aa).

3 stretches are compositionally biased toward polar residues: residues 1 to 11 (MESQQLHQNPH), 19 to 39 (ASVT…SASN), and 49 to 60 (KVNSQQETTPGT). 3 disordered regions span residues 1-86 (MESQ…GQYQ), 360-403 (HSEY…ATSS), and 418-438 (VSSQ…TERI). The tract at residues 295-397 (ENNINVSDRL…SSKPRAAKAH (103 aa)) is RNA-binding. Low complexity predominate over residues 369-381 (TSPNTTNTKVTTR).

In terms of assembly, homotrimer.

It is found in the cytoplasm. Capsid protein (CA) is the structural component of the virus-like particle (VLP), forming the shell that encapsulates the retrotransposons dimeric RNA genome. The particles are assembled from trimer-clustered units and there are holes in the capsid shells that allow for the diffusion of macromolecules. CA also has nucleocapsid-like chaperone activity, promoting primer tRNA(i)-Met annealing to the multipartite primer-binding site (PBS), dimerization of Ty2 RNA and initiation of reverse transcription. The protein is Transposon Ty2-GR1 Gag polyprotein (TY2A-GR1) of Saccharomyces cerevisiae (strain ATCC 204508 / S288c) (Baker's yeast).